We begin with the raw amino-acid sequence, 325 residues long: MSFSSTAKAEVSKKLSQNSCCARAAAAAFLKFTGNIYELDGTFSFKTSFENAQTARSFFLLMKNGFSKHCEVSIKKNSKLQKNYVYTIFLPPSSDNIGVLKDLHFVRKGAKEYHLSFSLKEELVRKKCCRKAFLQATFLSCGSITNPEKMYHLEFDVKTKDDAEFLQKVLKSFEFEAKIVERKSHYVVYLKEGDRIVDFLNIIGAHSSLLELENIRIVKELRNNVNRLVNCETANLEKTINASMRHIENIEFIERTIGIENLPQNLQEIARLRIKYKDASLKELGNMLEKPLGKSGVNHRLRKIDKIAEELRKGGVVHAKPSHED.

The segment at residues 280–313 is a DNA-binding region (H-T-H motif); that stretch reads SLKELGNMLEKPLGKSGVNHRLRKIDKIAEELRK.

This sequence belongs to the WhiA family.

Functionally, involved in cell division and chromosome segregation. The chain is Probable cell division protein WhiA from Caldicellulosiruptor bescii (strain ATCC BAA-1888 / DSM 6725 / KCTC 15123 / Z-1320) (Anaerocellum thermophilum).